A 956-amino-acid chain; its full sequence is Zinc finger CCHC domain-containing protein 14 (956 aa).

Disordered stretches follow at residues 25-50 (SSLN…PSGA), 78-99 (ALHT…GKHG), 206-229 (SSSS…KVGA), 243-276 (GIPS…GTGS), 361-464 (KEKS…EKEK), 485-505 (PVQN…PQLM), 543-583 (LEER…QGLS), and 750-786 (FYSG…PQPA). Gly residues predominate over residues 29–43 (SGGGGGGGGGGGGKS). Composition is skewed to low complexity over residues 206–225 (SSSS…PSLP) and 246–265 (SSQS…SASL). Residues 369–389 (LNSSAPSLVTSSGVARVTPTS) are compositionally biased toward polar residues. Over residues 423 to 432 (SSEYSSSSSS) the composition is skewed to low complexity. The segment covering 438 to 464 (VREESSDSAEESDRRVDIHVEGTEKEK) has biased composition (basic and acidic residues). Positions 750 to 768 (FYSGGAGSSSPGNIPASSQ) are enriched in low complexity. A CCHC-type zinc finger spans residues 913 to 930 (LSCYNCGATGHRAQDCKQ).

In Mus musculus (Mouse), this protein is Zinc finger CCHC domain-containing protein 14 (Zcchc14).